A 950-amino-acid chain; its full sequence is Translation initiation factor IF-2 (950 aa).

4 stretches are compositionally biased toward basic and acidic residues: residues 128–158 (KPKV…EAKA), 165–186 (AEVK…EKKK), 200–234 (KRAE…DNRR), and 291–312 (NRRD…DGNR). Positions 128–354 (KPKVAEPVKK…NNQSSSVPAT (227 aa)) are disordered. 2 stretches are compositionally biased toward polar residues: residues 322 to 336 (NRNQ…NWNQ) and 343 to 353 (YQNNQSSSVPA). The region spanning 448–619 (ERPAVVTIMG…LLVAEVQELK (172 aa)) is the tr-type G domain. The interval 457–464 (GHVDHGKT) is G1. 457-464 (GHVDHGKT) contacts GTP. The interval 482 to 486 (GITQH) is G2. The segment at 503 to 506 (DTPG) is G3. Residues 503–507 (DTPGH) and 557–560 (NKID) contribute to the GTP site. The interval 557–560 (NKID) is G4. Residues 595–597 (SAK) form a G5 region.

This sequence belongs to the TRAFAC class translation factor GTPase superfamily. Classic translation factor GTPase family. IF-2 subfamily.

The protein localises to the cytoplasm. In terms of biological role, one of the essential components for the initiation of protein synthesis. Protects formylmethionyl-tRNA from spontaneous hydrolysis and promotes its binding to the 30S ribosomal subunits. Also involved in the hydrolysis of GTP during the formation of the 70S ribosomal complex. In Lactococcus lactis subsp. cremoris (strain MG1363), this protein is Translation initiation factor IF-2.